The chain runs to 693 residues: MPRKTPLHMVRNIGIAAHIDAGKTTTTERILYYTGVSHKIGEVHEGAATMDWMEQEKERGITITSAATTCFWKDHQINIIDTPGHVDFTIEVERSMRVLDGAVAVFCAVGGVQPQSETVWRQANKYRVPRIAFVNKMDRIGADFYNVEKQIRERLKANAVPIQIPIGAEDNFKGVIDLVKMKALVWDDEAALGSKYEEQEIPEDLREKAEEYREKMIESVVETDEALMEKYFAGEELTEEEIKSAIKKATIAIEIVPMLCGTAFKNKGVQPLLDAVIDYLPAPDEVDWIKGIDPKTGEEISVNPSDDEPFAGLAFKIMTDPFVGKLTFTRFYSGTITSGSYVLNATKNKKERVGRLLRMHSNKREEVNEFYSGEIGAIVGLKNTLTGDTLCDEKRPIILERMEFPDPVISVAVEPKTKADQEKMAIALQKLAEEDPSFRVTTDEESGQTIISGMGELHLEIIVDRLKREFKVECNTGKPQVAYRETFKNQVEQEYKYAKQSGGRGQYGHVFIRLIPQEPGKGYEFVDLIKGGVIPREYIPAVDKGIQEAAQGGVLAGFPVVDFKVELFDGSYHDVDSSEMAFKLAGSMAFKEGVKKANPVILEPIMKVEIEVPEEYMGDVIGDINRRRGQVNSMEDVHGIKKINAFVPLSEMFGYSTDLRSMTQGRGTYSMVFDHYEEVPSNIADEIIKERQG.

The tr-type G domain occupies 8–284 (HMVRNIGIAA…AVIDYLPAPD (277 aa)). Residues 17-24 (AHIDAGKT), 81-85 (DTPGH), and 135-138 (NKMD) each bind GTP.

Belongs to the TRAFAC class translation factor GTPase superfamily. Classic translation factor GTPase family. EF-G/EF-2 subfamily.

The protein localises to the cytoplasm. Its function is as follows. Catalyzes the GTP-dependent ribosomal translocation step during translation elongation. During this step, the ribosome changes from the pre-translocational (PRE) to the post-translocational (POST) state as the newly formed A-site-bound peptidyl-tRNA and P-site-bound deacylated tRNA move to the P and E sites, respectively. Catalyzes the coordinated movement of the two tRNA molecules, the mRNA and conformational changes in the ribosome. The sequence is that of Elongation factor G from Nautilia profundicola (strain ATCC BAA-1463 / DSM 18972 / AmH).